A 310-amino-acid chain; its full sequence is Vomeronasal type-1 receptor 50 (310 aa).

The Extracellular portion of the chain corresponds to 1-16 (MSKANLLHTDNNMKIT). A helical membrane pass occupies residues 17 to 37 (LFSEVSVGISANSILFVVHLC). Topologically, residues 38 to 50 (KLLHENKPKPIDL) are cytoplasmic. Residues 51 to 71 (YIAFFSITQLMLLITMGLIAV) form a helical membrane-spanning segment. The Extracellular portion of the chain corresponds to 72-93 (DMFMPWGRWDSTTCQSLIYLHR). A disulfide bond links Cys85 and Cys172. Residues 94 to 114 (LLRGLTFCATCLLNVLWTITL) traverse the membrane as a helical segment. Topologically, residues 115–134 (SPRSSCLTKFKHKSPHHISG) are cytoplasmic. Residues 135 to 155 (AFLFFCVLYMSFSSHLLVSII) traverse the membrane as a helical segment. The Extracellular portion of the chain corresponds to 156–193 (ATFNSTSDNFLYVTQSCSILPVSYSRTSILSTMMTMRE). N-linked (GlcNAc...) asparagine glycosylation is present at Asn159. Residues 194 to 214 (AFLIGLMALSSGYVVVLLWRH) traverse the membrane as a helical segment. The Cytoplasmic portion of the chain corresponds to 215–237 (KKQARHLHSTSLSSKASPEQRAT). A helical transmembrane segment spans residues 238 to 258 (STIMLLMGFFVVLYILDTVIF). Over 259-269 (QARLKFKDVST) the chain is Extracellular. A helical membrane pass occupies residues 270-290 (FFCVKIIISHSYATFSPFVFI). Residues 291 to 310 (CNDKYMIKFVTSMCGRIVNV) lie on the Cytoplasmic side of the membrane.

It belongs to the G-protein coupled receptor 1 family. In terms of tissue distribution, expressed in a subset of sensory neurons located in the apical layer of the vomeronasal organ.

The protein resides in the cell membrane. In terms of biological role, putative pheromone receptor implicated in the regulation of social and reproductive behavior. The sequence is that of Vomeronasal type-1 receptor 50 (Vmn1r50) from Mus musculus (Mouse).